The following is a 203-amino-acid chain: Large ribosomal subunit protein uL6 (203 aa).

Belongs to the universal ribosomal protein uL6 family. In terms of assembly, part of the 50S ribosomal subunit.

This protein binds to the 23S rRNA, and is important in its secondary structure. It is located near the subunit interface in the base of the L7/L12 stalk, and near the tRNA binding site of the peptidyltransferase center. The chain is Large ribosomal subunit protein uL6 from Hyphomonas neptunium (strain ATCC 15444).